Reading from the N-terminus, the 24-residue chain is Iron-regulated 31 kDa protein (24 aa).

It localises to the periplasm. In terms of biological role, may be involved in iron uptake. The protein is Iron-regulated 31 kDa protein of Haemophilus influenzae.